The chain runs to 250 residues: NADH-quinone oxidoreductase subunit C (250 aa).

The segment at 193–250 is disordered; sequence GMTPPLPGDEKADMPPIDDPMVTEGPEDTGAGARANAKAAEGTPADPPAMDDEEEDDA. The segment covering 222–236 has biased composition (low complexity); the sequence is GAGARANAKAAEGTP. Positions 241 to 250 are enriched in acidic residues; that stretch reads AMDDEEEDDA.

This sequence belongs to the complex I 30 kDa subunit family. As to quaternary structure, NDH-1 is composed of 14 different subunits. Subunits NuoB, C, D, E, F, and G constitute the peripheral sector of the complex.

The protein resides in the cell inner membrane. The catalysed reaction is a quinone + NADH + 5 H(+)(in) = a quinol + NAD(+) + 4 H(+)(out). In terms of biological role, NDH-1 shuttles electrons from NADH, via FMN and iron-sulfur (Fe-S) centers, to quinones in the respiratory chain. The immediate electron acceptor for the enzyme in this species is believed to be ubiquinone. Couples the redox reaction to proton translocation (for every two electrons transferred, four hydrogen ions are translocated across the cytoplasmic membrane), and thus conserves the redox energy in a proton gradient. The polypeptide is NADH-quinone oxidoreductase subunit C (Erythrobacter litoralis (strain HTCC2594)).